A 64-amino-acid polypeptide reads, in one-letter code: Large ribosomal subunit protein bL35 (64 aa).

The span at M1–H26 shows a compositional bias: basic residues. Residues M1–R42 form a disordered region.

Belongs to the bacterial ribosomal protein bL35 family.

The protein is Large ribosomal subunit protein bL35 of Exiguobacterium sp. (strain ATCC BAA-1283 / AT1b).